A 192-amino-acid polypeptide reads, in one-letter code: Adenylate kinase (192 aa).

ATP is bound at residue 10-18 (GVPGVGGTT).

The protein belongs to the archaeal adenylate kinase family. In terms of assembly, monomer.

It is found in the cytoplasm. It catalyses the reaction AMP + ATP = 2 ADP. The polypeptide is Adenylate kinase (adkA) (Methanothermococcus thermolithotrophicus (Methanococcus thermolithotrophicus)).